A 615-amino-acid polypeptide reads, in one-letter code: DNA mismatch repair protein MutL (615 aa).

Positions 363–397 (FAEPAVREPVAPRYTPAPASGSRPAAPWPNAQPGY) are disordered. Positions 378–391 (PAPASGSRPAAPWP) are enriched in low complexity.

The protein belongs to the DNA mismatch repair MutL/HexB family.

This protein is involved in the repair of mismatches in DNA. It is required for dam-dependent methyl-directed DNA mismatch repair. May act as a 'molecular matchmaker', a protein that promotes the formation of a stable complex between two or more DNA-binding proteins in an ATP-dependent manner without itself being part of a final effector complex. The sequence is that of DNA mismatch repair protein MutL from Escherichia coli O157:H7.